The chain runs to 98 residues: Keratin-associated protein 3-3 (98 aa).

Ala2 bears the N-acetylalanine mark. Repeat copies occupy residues 3 to 7 (CCAPL), 8 to 12 (CCSAR), and 47 to 51 (CCDNC). A 3 X 5 AA repeats of C-C-X(3) region spans residues 3-59 (CCAPLCCSARTSPATTICSSDKFCRCGVCLPSTCPHTVWLLEPTCCDNCPPPCHIPQ).

It belongs to the KRTAP type 3 family. Interacts with hair keratins.

Functionally, in the hair cortex, hair keratin intermediate filaments are embedded in an interfilamentous matrix, consisting of hair keratin-associated proteins (KRTAP), which are essential for the formation of a rigid and resistant hair shaft through their extensive disulfide bond cross-linking with abundant cysteine residues of hair keratins. The matrix proteins include the high-sulfur and high-glycine-tyrosine keratins. This is Keratin-associated protein 3-3 from Bos taurus (Bovine).